The chain runs to 331 residues: Aldo-keto reductase YhdN (331 aa).

Residues threonine 20–tryptophan 21 and aspartate 52 contribute to the NADP(+) site. The Proton donor role is filled by tyrosine 57. NADP(+)-binding positions include glutamine 175, tyrosine 203–arginine 208, lysine 214, arginine 227, glycine 280–arginine 282, and glutamine 286.

This sequence belongs to the aldo/keto reductase family. Aldo/keto reductase 11 subfamily. Monomer.

Functionally, aldo-keto reductase (AKR) that displays broad substrate specificity in vitro. Is able to reduce the standard AKR substrates DL-glyceraldehyde, D-erythrose, methylglyoxal, p-nitrobenzaldehyde, benzaldehyde and butyraldehyde, in the presence of NADPH. Cannot use NADH as a cosubstrate. Does not act on glucose, 2-pyridine carboxyaldehyde, fructose and xylose. The physiological function of this enzyme is not clear. May play a role in bacterial stress response and/or in detoxification of reactive aldehydes. This is Aldo-keto reductase YhdN (yhdN) from Bacillus subtilis (strain 168).